Reading from the N-terminus, the 120-residue chain is Non-specific lipid-transfer protein (120 aa).

The signal sequence occupies residues Met-1–Gly-26. 3 disulfide bridges follow: Cys-40-Cys-56, Cys-57-Cys-102, and Cys-77-Cys-116.

Belongs to the plant LTP family.

In terms of biological role, plant non-specific lipid-transfer proteins transfer phospholipids as well as galactolipids across membranes. May play a role in wax or cutin deposition in the cell walls of expanding epidermal cells and certain secretory tissues. The polypeptide is Non-specific lipid-transfer protein (Gossypium hirsutum (Upland cotton)).